The primary structure comprises 264 residues: Tetraspanin-12 (264 aa).

Residues 1-13 (MLRLSNAAVITTN) lie on the Cytoplasmic side of the membrane. A helical transmembrane segment spans residues 14–34 (AILALIGLAALSFSVYVYVQG). The Extracellular segment spans residues 35–45 (PSQCQRFVQNP). The helical transmembrane segment at 46-66 (LIVTAALLFFISSLGLIAALY) threads the bilayer. The Cytoplasmic segment spans residues 67–75 (GSHIIITLY). The chain crosses the membrane as a helical span at residues 76-96 (LFFLFLSILLLLVLSVFIFLV). Residues 97–228 (TNPTAGKALS…VLKGIRKRWR (132 aa)) lie on the Extracellular side of the membrane. N-linked (GlcNAc...) asparagine glycosylation is present at Asn180. The helical transmembrane segment at 229 to 249 (ILIVVNLLLILLVVFLYSCGC) threads the bilayer. Over 250–264 (CVRKNNRVPWKRRFF) the chain is Cytoplasmic.

It belongs to the tetraspanin (TM4SF) family.

The protein resides in the membrane. Its function is as follows. May be involved in the regulation of cell differentiation. This is Tetraspanin-12 (TET12) from Arabidopsis thaliana (Mouse-ear cress).